Here is a 36-residue protein sequence, read N- to C-terminus: Pancreatic polypeptide (36 aa).

Y36 bears the Tyrosine amide mark.

The protein belongs to the NPY family.

It localises to the secreted. Its function is as follows. Hormone secreted by pancreatic cells that acts as a regulator of pancreatic and gastrointestinal functions probably by signaling through the G protein-coupled receptor NPY4R2. The sequence is that of Pancreatic polypeptide (PPY) from Ceratotherium simum (White rhinoceros).